Reading from the N-terminus, the 173-residue chain is Transcription factor HES-2 (173 aa).

Residues 13–70 form the bHLH domain; sequence LRKSLKPLLEKRRRARINQSLSQLKGLILPLLGRENSNCSKLEKADVLEMTVRFLQEL. In terms of domain architecture, Orange spans 86–119; it reads YREGYSACVARLARVLPACRVLEPAVSARLLEHL. Residues 128-173 form a disordered region; it reads LDGGRAGDSSGPSAPAPAPASAPEPASAPVPSPPSPPCGPGLWRPW. The segment covering 141–166 has biased composition (pro residues); it reads APAPAPASAPEPASAPVPSPPSPPCG. Positions 170–173 match the WRPW motif motif; sequence WRPW.

Transcription repression requires formation of a complex with a corepressor protein of the Groucho/TLE family. As to expression, expressed in placenta, pancreatic cancer, colon cancer with RER, cervical cancer, and in head and neck tumors.

The protein localises to the nucleus. In terms of biological role, transcriptional repressor of genes that require a bHLH protein for their transcription. The protein is Transcription factor HES-2 (HES2) of Homo sapiens (Human).